The sequence spans 205 residues: MRIGVLGFQGGVYEHVYMLKKSFHELGINGKVLIVKKPQQLHDLDGIIIPGGESTTISILARKTNVLELLREKIVEGLPVMGVCAGAIMLAKEVVDQVVGETKQPLLGVMDIAVTRNYFGRQRESFELDIVLDELDDKPFRAVFIRAPAITKYWGATKPIGIINYNGEKVVVAARENNKLALSFHPELTSDTRIHRYFIEKIIKK.

52-54 provides a ligand contact to L-glutamine; sequence GES. Cys84 functions as the Nucleophile in the catalytic mechanism. L-glutamine contacts are provided by residues Arg116 and 145-146; that span reads IR. Residues His185 and Glu187 each act as charge relay system in the active site.

This sequence belongs to the glutaminase PdxT/SNO family. In the presence of PdxS, forms a dodecamer of heterodimers. Only shows activity in the heterodimer.

The enzyme catalyses aldehydo-D-ribose 5-phosphate + D-glyceraldehyde 3-phosphate + L-glutamine = pyridoxal 5'-phosphate + L-glutamate + phosphate + 3 H2O + H(+). It catalyses the reaction L-glutamine + H2O = L-glutamate + NH4(+). The protein operates within cofactor biosynthesis; pyridoxal 5'-phosphate biosynthesis. Its function is as follows. Catalyzes the hydrolysis of glutamine to glutamate and ammonia as part of the biosynthesis of pyridoxal 5'-phosphate. The resulting ammonia molecule is channeled to the active site of PdxS. The chain is Pyridoxal 5'-phosphate synthase subunit PdxT from Staphylothermus marinus (strain ATCC 43588 / DSM 3639 / JCM 9404 / F1).